The following is a 431-amino-acid chain: UPF0597 protein TDE_2144 (431 aa).

It belongs to the UPF0597 family.

In Treponema denticola (strain ATCC 35405 / DSM 14222 / CIP 103919 / JCM 8153 / KCTC 15104), this protein is UPF0597 protein TDE_2144.